The chain runs to 349 residues: Probable dual-specificity RNA methyltransferase RlmN (349 aa).

The active-site Proton acceptor is E94. The 222-residue stretch at 100 to 321 folds into the Radical SAM core domain; it reads DEDRATLCVS…TQHGVFATIR (222 aa). The cysteines at positions 107 and 332 are disulfide-linked. Residues C114, C118, and C121 each contribute to the [4Fe-4S] cluster site. S-adenosyl-L-methionine-binding positions include 159–160, S191, 213–215, and H289; these read GE and SMH. C332 acts as the S-methylcysteine intermediate in catalysis.

Belongs to the radical SAM superfamily. RlmN family. Requires [4Fe-4S] cluster as cofactor.

The protein resides in the cytoplasm. The catalysed reaction is adenosine(2503) in 23S rRNA + 2 reduced [2Fe-2S]-[ferredoxin] + 2 S-adenosyl-L-methionine = 2-methyladenosine(2503) in 23S rRNA + 5'-deoxyadenosine + L-methionine + 2 oxidized [2Fe-2S]-[ferredoxin] + S-adenosyl-L-homocysteine. It catalyses the reaction adenosine(37) in tRNA + 2 reduced [2Fe-2S]-[ferredoxin] + 2 S-adenosyl-L-methionine = 2-methyladenosine(37) in tRNA + 5'-deoxyadenosine + L-methionine + 2 oxidized [2Fe-2S]-[ferredoxin] + S-adenosyl-L-homocysteine. Functionally, specifically methylates position 2 of adenine 2503 in 23S rRNA and position 2 of adenine 37 in tRNAs. In Phocaeicola vulgatus (strain ATCC 8482 / DSM 1447 / JCM 5826 / CCUG 4940 / NBRC 14291 / NCTC 11154) (Bacteroides vulgatus), this protein is Probable dual-specificity RNA methyltransferase RlmN.